The chain runs to 299 residues: ATP phosphoribosyltransferase (299 aa).

The protein belongs to the ATP phosphoribosyltransferase family. Long subfamily. The cofactor is Mg(2+).

The protein resides in the cytoplasm. It carries out the reaction 1-(5-phospho-beta-D-ribosyl)-ATP + diphosphate = 5-phospho-alpha-D-ribose 1-diphosphate + ATP. Its pathway is amino-acid biosynthesis; L-histidine biosynthesis; L-histidine from 5-phospho-alpha-D-ribose 1-diphosphate: step 1/9. Feedback inhibited by histidine. Functionally, catalyzes the condensation of ATP and 5-phosphoribose 1-diphosphate to form N'-(5'-phosphoribosyl)-ATP (PR-ATP). Has a crucial role in the pathway because the rate of histidine biosynthesis seems to be controlled primarily by regulation of HisG enzymatic activity. The polypeptide is ATP phosphoribosyltransferase (Campylobacter lari (strain RM2100 / D67 / ATCC BAA-1060)).